Reading from the N-terminus, the 647-residue chain is Pollen receptor-like kinase 2 (647 aa).

Positions 1–21 (MESKCLMFVSIVSVFFMVVNG) are cleaved as a signal peptide. 5 LRR repeats span residues 87–109 (LNSL…EFKK), 110–134 (LVAL…AFDG), 136–159 (GWLK…LVKS), 161–183 (KLIE…RHHP), and 185–203 (MLNL…SFST). Residues 248–268 (IVAAAVAALAASLIIIGVVIF) form a helical membrane-spanning segment. The Protein kinase domain occupies 338 to 613 (KASAEILGSG…EAVEKMEDLM (276 aa)). Ser340 is modified (phosphoserine). ATP-binding positions include 344–352 (LGSGCFGAS) and Lys366. Ser418 bears the Phosphoserine mark. Thr438 carries the post-translational modification Phosphothreonine. Residue Tyr508 is modified to Phosphotyrosine. The disordered stretch occupies residues 620–647 (DDDFYSTYASEADGRSSRGLSSEGINLS). Residues 637-647 (RGLSSEGINLS) show a composition bias toward polar residues.

Belongs to the protein kinase superfamily. Ser/Thr protein kinase family. As to quaternary structure, part of a complex containing ROPGEF1 and ARAC11/ROP1. The interaction between PRK2, ROPGEF1 and ARAC11/ROP1 is phosphorylation-independent. Interacts with ROPGEF12 (via C-terminus). Interacts with ROPGEF1 (via PRONE domain). Expressed in pollen and/or in flowers, but not in leaves. Expressed in pollen tube.

It is found in the cell membrane. It catalyses the reaction L-seryl-[protein] + ATP = O-phospho-L-seryl-[protein] + ADP + H(+). The enzyme catalyses L-threonyl-[protein] + ATP = O-phospho-L-threonyl-[protein] + ADP + H(+). The phosphorylation activity is calcium-independent. Receptor-like kinase involved in the control of pollen germination and pollen tube polar growth. Phosphorylates ROPGEF1 in its C-terminal region, releasing its auto-inhibition, and thereby activating the ROP1 signaling pathway. May act as a scaffolding protein, recruiting ROPGEF12 to the plasma membrane by binding to its C-terminal domain. Phosphorylates ROPGEF12, releasing its auto-inhibition. This is Pollen receptor-like kinase 2 from Arabidopsis thaliana (Mouse-ear cress).